Consider the following 417-residue polypeptide: Serine hydroxymethyltransferase (417 aa).

The residue at position 54 (Lys-54) is an N6-acetyllysine. (6S)-5,6,7,8-tetrahydrofolate contacts are provided by residues Leu-121 and 125–127; that span reads GHL. Lys-229 is modified (N6-(pyridoxal phosphate)lysine). Residues Lys-250, Lys-285, and Lys-354 each carry the N6-acetyllysine modification. 355-357 lines the (6S)-5,6,7,8-tetrahydrofolate pocket; sequence SPF. Lys-375 bears the N6-acetyllysine mark.

It belongs to the SHMT family. Homodimer. It depends on pyridoxal 5'-phosphate as a cofactor.

It is found in the cytoplasm. It catalyses the reaction (6R)-5,10-methylene-5,6,7,8-tetrahydrofolate + glycine + H2O = (6S)-5,6,7,8-tetrahydrofolate + L-serine. The protein operates within one-carbon metabolism; tetrahydrofolate interconversion. It functions in the pathway amino-acid biosynthesis; glycine biosynthesis; glycine from L-serine: step 1/1. Its function is as follows. Catalyzes the reversible interconversion of serine and glycine with tetrahydrofolate (THF) serving as the one-carbon carrier. This reaction serves as the major source of one-carbon groups required for the biosynthesis of purines, thymidylate, methionine, and other important biomolecules. Also exhibits THF-independent aldolase activity toward beta-hydroxyamino acids, producing glycine and aldehydes, via a retro-aldol mechanism. This chain is Serine hydroxymethyltransferase, found in Escherichia coli O17:K52:H18 (strain UMN026 / ExPEC).